A 213-amino-acid polypeptide reads, in one-letter code: Thymidylate kinase (213 aa).

10–17 (GLEGAGKT) contributes to the ATP binding site.

This sequence belongs to the thymidylate kinase family.

It catalyses the reaction dTMP + ATP = dTDP + ADP. Its function is as follows. Phosphorylation of dTMP to form dTDP in both de novo and salvage pathways of dTTP synthesis. The protein is Thymidylate kinase of Escherichia coli O1:K1 / APEC.